The primary structure comprises 183 residues: I-kappa-B like protein N2 (183 aa).

ANK repeat units follow at residues 62 to 95 (DGNT…DLNL) and 99 to 129 (CHKP…NLEA). The segment at 163–183 (PRQDGSSEDEVSDSEEKSDSE) is disordered.

The protein belongs to the polydnaviridae I-Kappa-B like protein family.

Functionally, suppresses the host immune response through NF-kappa-B inactivation. Possesses ankyrin repeat domains required for NF-kappa-B binding but lacks the regulatory regions required for dissociation from NF-kappa-B and degradation. Therefore, prevents host NF-kappa-B release and subsequent activation. The chain is I-kappa-B like protein N2 (N5) from Microplitis demolitor (Parasitoid wasp).